Here is a 119-residue protein sequence, read N- to C-terminus: Hydrogenase maturation factor HypA (119 aa).

A Ni(2+)-binding site is contributed by histidine 2. Positions 73, 76, 89, and 92 each coordinate Zn(2+).

The protein belongs to the HypA/HybF family.

Functionally, involved in the maturation of [NiFe] hydrogenases. Required for nickel insertion into the metal center of the hydrogenase. The chain is Hydrogenase maturation factor HypA from Dehalococcoides mccartyi (strain ATCC BAA-2266 / KCTC 15142 / 195) (Dehalococcoides ethenogenes (strain 195)).